The following is a 263-amino-acid chain: Triosephosphate isomerase (263 aa).

Position 10-12 (10-12 (NWK)) interacts with substrate. The Electrophile role is filled by His104. Glu176 (proton acceptor) is an active-site residue. Residues Gly182, Ser221, and 242–243 (GG) each bind substrate.

The protein belongs to the triosephosphate isomerase family. As to quaternary structure, homodimer.

It localises to the cytoplasm. It carries out the reaction D-glyceraldehyde 3-phosphate = dihydroxyacetone phosphate. It participates in carbohydrate biosynthesis; gluconeogenesis. The protein operates within carbohydrate degradation; glycolysis; D-glyceraldehyde 3-phosphate from glycerone phosphate: step 1/1. Involved in the gluconeogenesis. Catalyzes stereospecifically the conversion of dihydroxyacetone phosphate (DHAP) to D-glyceraldehyde-3-phosphate (G3P). The protein is Triosephosphate isomerase of Haemophilus influenzae (strain PittEE).